The chain runs to 340 residues: Serine racemase (340 aa).

E13 is a binding site for Mg(2+). ATP is bound by residues S31, S32, I33, K51, and T52. K56 functions as the Proton acceptor in the catalytic mechanism. K56 bears the N6-(pyridoxal phosphate)lysine mark. P69 and T81 together coordinate Ca(2+). S84 serves as the catalytic Proton acceptor. Residue N86 participates in pyridoxal 5'-phosphate binding. ATP is bound at residue Q89. An S-nitrosocysteine modification is found at C113. Y121 serves as a coordination point for ATP. N154 provides a ligand contact to pyridoxal 5'-phosphate. D178 lines the Mg(2+) pocket. Pyridoxal 5'-phosphate-binding residues include G185, G186, G187, G188, and M189. Residues E210, A214, D216, and N247 each contribute to the Mg(2+) site. Ca(2+)-binding residues include E210, A214, D216, and N247. E210, A214, and D216 together coordinate Mn(2+). K279 lines the ATP pocket. S313 serves as a coordination point for pyridoxal 5'-phosphate. An ATP-binding site is contributed by N316.

Belongs to the serine/threonine dehydratase family. In terms of assembly, homodimer. Requires Mg(2+) as cofactor. The cofactor is Mn(2+). Ca(2+) is required as a cofactor. It depends on pyridoxal 5'-phosphate as a cofactor. In terms of processing, S-nitrosylated, leading to decrease the enzyme activity. As to expression, expressed in the cerebellum, hippocampus, dorsolateral prefrontal cortex, and in motor neurons and glial cells of the lumbar spinal cord (at protein level). Increased in the dorsolateral prefrontal cortex of schizophrenic patients (at protein level). Brain: expressed at high levels in hippocampus and corpus callosum, intermediate levels in substantia nigra and caudate, and low levels in amygdala, thalamus, and subthalamic nuclei. Expressed in heart, skeletal muscle, kidney, and liver.

It carries out the reaction L-serine = D-serine. The enzyme catalyses D-serine = pyruvate + NH4(+). The catalysed reaction is L-serine = pyruvate + NH4(+). Its activity is regulated as follows. Allosterically activated by magnesium, and possibly also other divalent metal cations. Allosterically activated by ATP, ADP or GTP. Competitively inhibited by malonate. Inhibited by meso-tartrate and malonate. In terms of biological role, catalyzes the synthesis of D-serine from L-serine. D-serine is a key coagonist with glutamate at NMDA receptors. Has dehydratase activity towards both L-serine and D-serine. The polypeptide is Serine racemase (SRR) (Homo sapiens (Human)).